The primary structure comprises 459 residues: 5-hydroxytryptamine receptor 2C (459 aa).

A signal peptide spans 1–32 (MVNLGTAVRSLLVHLIGLLVWQFDISISPVAA). The Extracellular portion of the chain corresponds to 33–56 (IVTDTFNSSDGGRLFQFPDGVQNW). Residues 57-81 (PALSIVVIIIMTIGGNILVIMAVSM) traverse the membrane as a helical segment. Residues 82–87 (EKKLHN) lie on the Cytoplasmic side of the membrane. The helical transmembrane segment at 88–112 (ATNYFLMSLAIADMLVGLLVMPLSL) threads the bilayer. Topologically, residues 113 to 129 (LAILYDYVWPLPRYLCP) are extracellular. Residues Cys-128 and Cys-208 are joined by a disulfide bond. Residues 130-152 (VWISLDVLFSTASIMHLCAISLD) form a helical membrane-spanning segment. Residue Thr-140 participates in ergotamine binding. The DRY motif; important for ligand-induced conformation changes signature appears at 152 to 154 (DRY). Topologically, residues 153-168 (RYVAIRNPIEHSRFNS) are cytoplasmic. The helical transmembrane segment at 169–190 (RTKAIMKIAIVWAISIGVSVPI) threads the bilayer. The Extracellular segment spans residues 191–214 (PVIGLRDESKVFVNNTTCVLNDPN). 2 N-linked (GlcNAc...) asparagine glycosylation sites follow: Asn-204 and Asn-205. Residue Leu-210 coordinates ergotamine. The chain crosses the membrane as a helical span at residues 215-237 (FVLIGSFVAFFIPLTIMVITYFL). The Cytoplasmic segment spans residues 238–312 (TIYVLRRQTL…AINNEKKASK (75 aa)). The segment at 274–302 (DEEENAPNPNPDQKPRRKKKEKRPRGTMQ) is disordered. A compositionally biased stretch (basic residues) spans 288-298 (PRRKKKEKRPR). The chain crosses the membrane as a helical span at residues 313–337 (VLGIVFFVFLIMWCPFFITNILSVL). Residues Cys-338 and Cys-342 are joined by a disulfide bond. Over 338–348 (CGKACNQKLME) the chain is Extracellular. Residues 349 to 371 (KLLNVFVWIGYVCSGINPLVYTL) form a helical membrane-spanning segment. The short motif at 365-369 (NPLVY) is the NPxxY motif; important for ligand-induced conformation changes and signaling element. The Cytoplasmic portion of the chain corresponds to 372 to 459 (FNKIYRRAFS…NVVSERISSV (88 aa)). The short motif at 457-459 (SSV) is the PDZ-binding element.

It belongs to the G-protein coupled receptor 1 family. In terms of assembly, interacts with MPDZ. Interacts with ARRB2. Interacts with MPP3; this interaction stabilizes the receptor at the plasma membrane and prevents the desensitization of the HTR2C receptor-mediated calcium response. As to expression, detected in brain cortex, hypothalamus, brainstem and arcuate nucleus. Detected in the paraventricular nucleus of the hypothalamus.

The protein resides in the cell membrane. Functionally, G-protein coupled receptor for 5-hydroxytryptamine (serotonin). Also functions as a receptor for various drugs and psychoactive substances, including ergot alkaloid derivatives, 1-2,5,-dimethoxy-4-iodophenyl-2-aminopropane (DOI) and lysergic acid diethylamide (LSD). Ligand binding causes a conformation change that triggers signaling via guanine nucleotide-binding proteins (G proteins) and modulates the activity of downstream effectors. HTR2C is coupled to G(q)/G(11) G alpha proteins and activates phospholipase C-beta, releasing diacylglycerol (DAG) and inositol 1,4,5-trisphosphate (IP3) second messengers that modulate the activity of phosphatidylinositol 3-kinase and promote the release of Ca(2+) ions from intracellular stores, respectively. Beta-arrestin family members inhibit signaling via G proteins and mediate activation of alternative signaling pathways. Regulates neuronal activity via the activation of short transient receptor potential calcium channels in the brain, and thereby modulates the activation of pro-opiomelanocortin neurons and the release of CRH that then regulates the release of corticosterone. Plays a role in the regulation of appetite and eating behavior, responses to anxiogenic stimuli and stress. Plays a role in insulin sensitivity and glucose homeostasis. This is 5-hydroxytryptamine receptor 2C from Mus musculus (Mouse).